The following is a 609-amino-acid chain: Threonine--tRNA ligase (609 aa).

The segment at Met1–Glu143 is editing domain. Catalytic stretches follow at residues Pro195 to Pro491 and Arg196 to Pro491. Zn(2+)-binding residues include Cys288, His339, and His460.

The protein belongs to the class-II aminoacyl-tRNA synthetase family. In terms of assembly, homodimer. It depends on Zn(2+) as a cofactor.

Its subcellular location is the cytoplasm. The enzyme catalyses tRNA(Thr) + L-threonine + ATP = L-threonyl-tRNA(Thr) + AMP + diphosphate + H(+). In terms of biological role, catalyzes the attachment of threonine to tRNA(Thr) in a two-step reaction: L-threonine is first activated by ATP to form Thr-AMP and then transferred to the acceptor end of tRNA(Thr). Also edits incorrectly charged L-seryl-tRNA(Thr). The protein is Threonine--tRNA ligase of Pyrobaculum neutrophilum (strain DSM 2338 / JCM 9278 / NBRC 100436 / V24Sta) (Thermoproteus neutrophilus).